The following is a 307-amino-acid chain: MTEKLSMQAIILKLQQYWSAQGCMLMQAYDTEKGAGTMSPYTFLRAIGPEPWNAAYVEPSRRPADGRYGENPNRLYQHHQFQVIMKPSPDNIQELYLNSLKELGIDPLEHDIRFVEDNWENPSMGCAGVGWEVWLDGMEITQFTYFQVVGGMEVDPVTSEVTYGLERLASYIQDVNSVFDLEWADGVKYGDIFKEPEYEHSKYSFEESNQDMLLRHFDEFEDEAKKQIANGLVHPAYDYVLKCSHTFNLLDARGAVSVTERAGYLSRIRNMARSIARAFVAERKKRGFPLVKDEKLRQQLLADEEAK.

The protein belongs to the class-II aminoacyl-tRNA synthetase family. In terms of assembly, tetramer of two alpha and two beta subunits.

The protein localises to the cytoplasm. The catalysed reaction is tRNA(Gly) + glycine + ATP = glycyl-tRNA(Gly) + AMP + diphosphate. In Levilactobacillus brevis (strain ATCC 367 / BCRC 12310 / CIP 105137 / JCM 1170 / LMG 11437 / NCIMB 947 / NCTC 947) (Lactobacillus brevis), this protein is Glycine--tRNA ligase alpha subunit.